An 89-amino-acid polypeptide reads, in one-letter code: Large ribosomal subunit protein bL27 (89 aa).

Residues 1 to 21 (MAHKKAGGSSRNGRDSAGRRL) form a disordered region.

The protein belongs to the bacterial ribosomal protein bL27 family.

In Erythrobacter litoralis (strain HTCC2594), this protein is Large ribosomal subunit protein bL27.